Consider the following 396-residue polypeptide: Argininosuccinate synthase (396 aa).

Residues 10–18 and Ala-37 each bind ATP; that span reads AYSGGLDTS. The L-citrulline site is built by Tyr-88 and Ser-93. Gly-118 contributes to the ATP binding site. Residues Thr-120, Asn-124, and Asp-125 each contribute to the L-aspartate site. Residue Asn-124 participates in L-citrulline binding. L-citrulline-binding residues include Arg-128, Ser-176, Ser-185, Glu-261, and Tyr-273.

Belongs to the argininosuccinate synthase family. Type 1 subfamily. As to quaternary structure, homotetramer.

The protein resides in the cytoplasm. The catalysed reaction is L-citrulline + L-aspartate + ATP = 2-(N(omega)-L-arginino)succinate + AMP + diphosphate + H(+). Its pathway is amino-acid biosynthesis; L-arginine biosynthesis; L-arginine from L-ornithine and carbamoyl phosphate: step 2/3. This is Argininosuccinate synthase from Nitratidesulfovibrio vulgaris (strain DP4) (Desulfovibrio vulgaris).